The chain runs to 688 residues: Complement C1s-1 subcomponent (688 aa).

The first 15 residues, Met1–Ala15, serve as a signal peptide directing secretion. The CUB 1 domain maps to Glu16–Ile130. The Ca(2+) site is built by Glu60, Asp68, Asp113, Asp131, Ile132, and Glu134. Cys65 and Cys83 are disulfide-bonded. The 42-residue stretch at Asp131–Gly172 folds into the EGF-like; calcium-binding domain. Cystine bridges form between Cys135/Cys147, Cys143/Cys156, and Cys158/Cys171. Residues Asn149, Phe150, and Gly153 each coordinate Ca(2+). Asn149 bears the (3R)-3-hydroxyasparagine mark. An N-linked (GlcNAc...) asparagine glycan is attached at Asn174. The cysteines at positions 175 and 202 are disulfide-linked. The 116-residue stretch at Cys175–Asp290 folds into the CUB 2 domain. Residues Glu226, Asp236, Asp275, Gly278, and Gln279 each coordinate Ca(2+). Cysteines 234 and 251 form a disulfide. Sushi domains lie at Ile292–Pro356 and Val357–Pro423. 7 disulfide bridges follow: Cys294-Cys341, Cys321-Cys354, Cys359-Cys403, Cys386-Cys421, Cys425-Cys549, Cys595-Cys618, and Cys627-Cys659. A Peptidase S1 domain is found at Ile438 to Gln680. Active-site charge relay system residues include His475 and Asp529. The active-site Charge relay system is Ser631. An N-linked (GlcNAc...) asparagine glycan is attached at Asn641.

This sequence belongs to the peptidase S1 family. In terms of assembly, core component of the complement C1 complex, a calcium-dependent complex composed of 1 molecule of the C1Q subcomplex, 2 molecules of C1R and 2 molecules of C1S. The C1Q subcomplex is composed 18 subunits: 3 chains of C1QA, C1QB, and C1QC trimerize to form 6 collagen-like triple helices connected to six globular ligand-recognition modules. In terms of processing, cleaved and activated by C1R to generate Complement C1s subcomponent heavy and light chains. Post-translationally, the iron and 2-oxoglutarate dependent 3-hydroxylation of aspartate and asparagine is (R) stereospecific within EGF domains. In terms of tissue distribution, predominantly expressed in liver.

Its subcellular location is the secreted. It is found in the cell surface. The enzyme catalyses Cleavage of Arg-|-Ala bond in complement component C4 to form C4a and C4b, and Lys(or Arg)-|-Lys bond in complement component C2 to form C2a and C2b: the 'classical' pathway C3 convertase.. With respect to regulation, cleaved and activated by C1R. Immunoglobulin-binding promotes autoactivation of C1R, which results in the cleavage of the Arg-Ile bond in the catalytic domain. Inhibited by C1 inhibitor (SERPING1). Component of the complement C1 complex, a multiprotein complex that initiates the classical pathway of the complement system, a cascade of proteins that leads to phagocytosis and breakdown of pathogens and signaling that strengthens the adaptive immune system. C1S is activated following association of the C1 complex with immunoglobulins (IgG or IgM) complexed with antigens to form antigen-antibody complexes on the surface of pathogens. C1S is cleaved and activated by C1R to generate C1s subcomponent heavy and light chains. C1s subcomponent light chain then cleaves and activates C2 and C4, the next components of the classical complement pathway. Functionally, serine protease component of the complement C1 complex, which catalyzes cleavage and activation of C2 and C4, the next components of the classical complement pathway. Also cleaves IGFBP5 and thereby inhibits the trophic effects of IGF1. This chain is Complement C1s-1 subcomponent, found in Mus musculus (Mouse).